The following is a 627-amino-acid chain: Carene synthase, chloroplastic (627 aa).

The N-terminal 36 residues, 1–36, are a transit peptide targeting the chloroplast; it reads MSVISILPLASKSCLYKSLMSSTHELKALCRPIATL. Residues aspartate 378, aspartate 382, and aspartate 530 each coordinate Mg(2+). Residues 378-382 carry the DDXXD motif motif; the sequence is DDMYD.

This sequence belongs to the terpene synthase family. Tpsd subfamily. The cofactor is Mg(2+). Mn(2+) serves as cofactor.

Its subcellular location is the plastid. It localises to the chloroplast. It carries out the reaction (2E)-geranyl diphosphate = (+)-car-3-ene + diphosphate. The protein operates within terpene metabolism; oleoresin biosynthesis. Functionally, terpene synthase (TPS) involved in defensive oleoresin formation in conifers in response to insect attack or other injury. This is Carene synthase, chloroplastic (JF67) from Picea abies (Norway spruce).